A 127-amino-acid chain; its full sequence is Small ribosomal subunit protein bS6 (127 aa).

This sequence belongs to the bacterial ribosomal protein bS6 family.

Its function is as follows. Binds together with bS18 to 16S ribosomal RNA. The chain is Small ribosomal subunit protein bS6 from Buchnera aphidicola subsp. Cinara cedri (strain Cc).